Here is a 432-residue protein sequence, read N- to C-terminus: Non-peptidase homolog YmxG (432 aa).

The first 20 residues, 1–20 (MKKFLITLLLGVFMGLQASA), serve as a signal peptide directing secretion.

Belongs to the peptidase M16 family.

It is found in the secreted. Functionally, may contribute to the full activity of the protease PqqE. The sequence is that of Non-peptidase homolog YmxG from Helicobacter pylori (strain ATCC 700392 / 26695) (Campylobacter pylori).